Reading from the N-terminus, the 183-residue chain is MITMKDIVREGHPSLTRSAAVVEVPLSKDDKQLLEDMMQFLKNSQDEEIAEKYELRAGVGIAAPQLGIEKQIIAIHFEDIDGKLYSMGLVNPKIISHSVEQSYLSSGEGCLSVDRPVEGYVPRHARITIKATDINDQPVKLRLKGYPAIVFQHEIDHINGIMFFDRINTEDPFNIPENSSPIQ.

Fe cation contacts are provided by C110 and H153. E154 is an active-site residue. H157 is a binding site for Fe cation.

This sequence belongs to the polypeptide deformylase family. Requires Fe(2+) as cofactor.

It catalyses the reaction N-terminal N-formyl-L-methionyl-[peptide] + H2O = N-terminal L-methionyl-[peptide] + formate. In terms of biological role, removes the formyl group from the N-terminal Met of newly synthesized proteins. Requires at least a dipeptide for an efficient rate of reaction. N-terminal L-methionine is a prerequisite for activity but the enzyme has broad specificity at other positions. In Oceanobacillus iheyensis (strain DSM 14371 / CIP 107618 / JCM 11309 / KCTC 3954 / HTE831), this protein is Peptide deformylase.